We begin with the raw amino-acid sequence, 283 residues long: Diaminopimelate epimerase (283 aa).

Asn13 and Asn67 together coordinate substrate. The Proton donor role is filled by Cys76. Substrate-binding positions include 77–78, Asn166, Asn199, and 217–218; these read GN and ER. The Proton acceptor role is filled by Cys226. 227-228 is a substrate binding site; it reads GT.

It belongs to the diaminopimelate epimerase family. In terms of assembly, homodimer.

The protein localises to the cytoplasm. It catalyses the reaction (2S,6S)-2,6-diaminopimelate = meso-2,6-diaminopimelate. It participates in amino-acid biosynthesis; L-lysine biosynthesis via DAP pathway; DL-2,6-diaminopimelate from LL-2,6-diaminopimelate: step 1/1. In terms of biological role, catalyzes the stereoinversion of LL-2,6-diaminopimelate (L,L-DAP) to meso-diaminopimelate (meso-DAP), a precursor of L-lysine and an essential component of the bacterial peptidoglycan. The polypeptide is Diaminopimelate epimerase (Desulforapulum autotrophicum (strain ATCC 43914 / DSM 3382 / VKM B-1955 / HRM2) (Desulfobacterium autotrophicum)).